The following is a 23-amino-acid chain: Phallacidin proprotein (23 aa).

Proline 1 is a propeptide. Positions 2 to 8 form a cross-link, cyclopeptide (Ala-Pro); it reads AWLVDCP. The segment at residues 3-7 is a cross-link (2'-cysteinyl-6'-hydroxytryptophan sulfoxide (Trp-Cys)); the sequence is WLVDC. A propeptide spanning residues 9 to 23 is cleaved from the precursor; the sequence is CVGDDVNRLLARGEK.

The protein belongs to the MSDIN fungal toxin family. In terms of processing, processed by the macrocyclase-peptidase enzyme POPB to yield a toxic cyclic heptapeptide. POPB first removes 10 residues from the N-terminus. Conformational trapping of the remaining peptide forces the enzyme to release this intermediate rather than proceed to macrocyclization. The enzyme rebinds the remaining peptide in a different conformation and catalyzes macrocyclization of the N-terminal 7 residues.

Its function is as follows. Major toxin that belongs to the bicyclic heptapeptides called phallotoxins. Although structurally related to amatoxins, phallotoxins have a different mode of action, which is the stabilization of F-actin. Phallotoxins are poisonous when administered parenterally, but not orally because of poor absorption. The polypeptide is Phallacidin proprotein (Amanita fuliginea (East Asian brown death cap)).